A 358-amino-acid polypeptide reads, in one-letter code: Putative ankyrin repeat protein FPV242 (358 aa).

ANK repeat units follow at residues 6–35 (NNYR…NMIV), 40–69 (NNHT…NLVY), 91–118 (TRRN…DKGV), 119–147 (ELTG…SVEY), 149–177 (GFFP…DINK), 180–209 (CGET…DIEK), 214–243 (EQDP…SIDT), 248–277 (NHKP…NPFI), 280–312 (EGNT…RLPG), and 316–345 (YYIQ…RITS).

The protein is Putative ankyrin repeat protein FPV242 of Fowlpox virus (strain NVSL) (FPV).